Here is a 248-residue protein sequence, read N- to C-terminus: Probable pyridoxal 5'-phosphate synthase subunit pdx2 (248 aa).

70 to 72 (GES) is a binding site for L-glutamine. The active-site Nucleophile is the Cys-106. Residues Arg-136 and 174-175 (IR) contribute to the L-glutamine site. Active-site charge relay system residues include His-221 and Glu-223.

Belongs to the glutaminase PdxT/SNO family.

It carries out the reaction aldehydo-D-ribose 5-phosphate + D-glyceraldehyde 3-phosphate + L-glutamine = pyridoxal 5'-phosphate + L-glutamate + phosphate + 3 H2O + H(+). The enzyme catalyses L-glutamine + H2O = L-glutamate + NH4(+). It functions in the pathway cofactor biosynthesis; pyridoxal 5'-phosphate biosynthesis. Functionally, catalyzes the hydrolysis of glutamine to glutamate and ammonia as part of the biosynthesis of pyridoxal 5'-phosphate. The resulting ammonia molecule is channeled to the active site of pdx1. The polypeptide is Probable pyridoxal 5'-phosphate synthase subunit pdx2 (Dictyostelium discoideum (Social amoeba)).